The following is a 796-amino-acid chain: Polyribonucleotide nucleotidyltransferase (796 aa).

Mg(2+) is bound by residues D490 and D496. One can recognise a KH domain in the interval 557–616; it reads PRIESIFINKDKIRNVIGSGGKNIRDICEKTGAKIEIIQDGTVMIYAVNNEAVEYAKSMI. Residues 626–693 form the S1 motif domain; it reads GKVFEGTVVE…DREHIQLSMR (68 aa). Composition is skewed to low complexity over residues 717–728, 747–759, and 769–784; these read DDSCGSTGGSSF, GGSS…NSNG, and SSNG…SNSR. Residues 717 to 796 form a disordered region; sequence DDSCGSTGGS…HDVPRKPRFF (80 aa). A compositionally biased stretch (basic and acidic residues) spans 785–796; that stretch reads NGHDVPRKPRFF.

This sequence belongs to the polyribonucleotide nucleotidyltransferase family. Requires Mg(2+) as cofactor.

Its subcellular location is the cytoplasm. It catalyses the reaction RNA(n+1) + phosphate = RNA(n) + a ribonucleoside 5'-diphosphate. In terms of biological role, involved in mRNA degradation. Catalyzes the phosphorolysis of single-stranded polyribonucleotides processively in the 3'- to 5'-direction. This is Polyribonucleotide nucleotidyltransferase from Ehrlichia chaffeensis (strain ATCC CRL-10679 / Arkansas).